The chain runs to 365 residues: DNA replication and repair protein RecF (365 aa).

30–37 (GRNAQGKT) lines the ATP pocket.

The protein belongs to the RecF family.

The protein localises to the cytoplasm. Its function is as follows. The RecF protein is involved in DNA metabolism; it is required for DNA replication and normal SOS inducibility. RecF binds preferentially to single-stranded, linear DNA. It also seems to bind ATP. This Streptococcus pneumoniae serotype 4 (strain ATCC BAA-334 / TIGR4) protein is DNA replication and repair protein RecF.